A 348-amino-acid polypeptide reads, in one-letter code: S-adenosylmethionine:tRNA ribosyltransferase-isomerase (348 aa).

The protein belongs to the QueA family. As to quaternary structure, monomer.

The protein resides in the cytoplasm. The enzyme catalyses 7-aminomethyl-7-carbaguanosine(34) in tRNA + S-adenosyl-L-methionine = epoxyqueuosine(34) in tRNA + adenine + L-methionine + 2 H(+). It participates in tRNA modification; tRNA-queuosine biosynthesis. Transfers and isomerizes the ribose moiety from AdoMet to the 7-aminomethyl group of 7-deazaguanine (preQ1-tRNA) to give epoxyqueuosine (oQ-tRNA). The chain is S-adenosylmethionine:tRNA ribosyltransferase-isomerase from Polynucleobacter necessarius subsp. necessarius (strain STIR1).